We begin with the raw amino-acid sequence, 348 residues long: D-erythrose-4-phosphate dehydrogenase (348 aa).

12 to 13 (RI) contributes to the NAD(+) binding site. Substrate contacts are provided by residues 154-156 (SCT), arginine 200, 213-214 (TR), and arginine 236. The Nucleophile role is filled by cysteine 155. NAD(+) is bound at residue asparagine 318.

Belongs to the glyceraldehyde-3-phosphate dehydrogenase family. Epd subfamily. In terms of assembly, homotetramer.

The protein localises to the cytoplasm. The catalysed reaction is D-erythrose 4-phosphate + NAD(+) + H2O = 4-phospho-D-erythronate + NADH + 2 H(+). It functions in the pathway cofactor biosynthesis; pyridoxine 5'-phosphate biosynthesis; pyridoxine 5'-phosphate from D-erythrose 4-phosphate: step 1/5. Its function is as follows. Catalyzes the NAD-dependent conversion of D-erythrose 4-phosphate to 4-phosphoerythronate. In Erwinia tasmaniensis (strain DSM 17950 / CFBP 7177 / CIP 109463 / NCPPB 4357 / Et1/99), this protein is D-erythrose-4-phosphate dehydrogenase.